A 504-amino-acid chain; its full sequence is ATP synthase subunit alpha 1 (504 aa).

Residue 172-179 (GDRQTGKT) coordinates ATP.

Belongs to the ATPase alpha/beta chains family. As to quaternary structure, F-type ATPases have 2 components, CF(1) - the catalytic core - and CF(0) - the membrane proton channel. CF(1) has five subunits: alpha(3), beta(3), gamma(1), delta(1), epsilon(1). CF(0) has three main subunits: a(1), b(2) and c(9-12). The alpha and beta chains form an alternating ring which encloses part of the gamma chain. CF(1) is attached to CF(0) by a central stalk formed by the gamma and epsilon chains, while a peripheral stalk is formed by the delta and b chains.

It is found in the cell inner membrane. It carries out the reaction ATP + H2O + 4 H(+)(in) = ADP + phosphate + 5 H(+)(out). In terms of biological role, produces ATP from ADP in the presence of a proton gradient across the membrane. The alpha chain is a regulatory subunit. The protein is ATP synthase subunit alpha 1 of Rhodopirellula baltica (strain DSM 10527 / NCIMB 13988 / SH1).